We begin with the raw amino-acid sequence, 159 residues long: NADH-quinone oxidoreductase subunit I (159 aa).

2 4Fe-4S ferredoxin-type domains span residues 51-80 and 90-119; these read RRYENGEERCIACKLCEAICPAQAIVIESD and TRYDIDMTKCIYCGLCQEACPVDAIVEGPN. [4Fe-4S] cluster contacts are provided by Cys-60, Cys-63, Cys-66, Cys-70, Cys-99, Cys-102, Cys-105, and Cys-109.

This sequence belongs to the complex I 23 kDa subunit family. NDH-1 is composed of 14 different subunits. Subunits NuoA, H, J, K, L, M, N constitute the membrane sector of the complex. It depends on [4Fe-4S] cluster as a cofactor.

Its subcellular location is the cell inner membrane. The catalysed reaction is a quinone + NADH + 5 H(+)(in) = a quinol + NAD(+) + 4 H(+)(out). In terms of biological role, NDH-1 shuttles electrons from NADH, via FMN and iron-sulfur (Fe-S) centers, to quinones in the respiratory chain. The immediate electron acceptor for the enzyme in this species is believed to be ubiquinone. Couples the redox reaction to proton translocation (for every two electrons transferred, four hydrogen ions are translocated across the cytoplasmic membrane), and thus conserves the redox energy in a proton gradient. This is NADH-quinone oxidoreductase subunit I from Rickettsia prowazekii (strain Madrid E).